Here is a 256-residue protein sequence, read N- to C-terminus: 4-hydroxy-tetrahydrodipicolinate reductase (256 aa).

8–13 (GATGRV) lines the NAD(+) pocket. Lysine 36 provides a ligand contact to NADP(+). Residues 89 to 91 (GTT) and 113 to 116 (ATNM) contribute to the NAD(+) site. Histidine 145 (proton donor/acceptor) is an active-site residue. Histidine 146 provides a ligand contact to (S)-2,3,4,5-tetrahydrodipicolinate. Lysine 149 (proton donor) is an active-site residue. 155–156 (GT) contacts (S)-2,3,4,5-tetrahydrodipicolinate.

This sequence belongs to the DapB family.

It is found in the cytoplasm. The catalysed reaction is (S)-2,3,4,5-tetrahydrodipicolinate + NAD(+) + H2O = (2S,4S)-4-hydroxy-2,3,4,5-tetrahydrodipicolinate + NADH + H(+). It carries out the reaction (S)-2,3,4,5-tetrahydrodipicolinate + NADP(+) + H2O = (2S,4S)-4-hydroxy-2,3,4,5-tetrahydrodipicolinate + NADPH + H(+). The protein operates within amino-acid biosynthesis; L-lysine biosynthesis via DAP pathway; (S)-tetrahydrodipicolinate from L-aspartate: step 4/4. Functionally, catalyzes the conversion of 4-hydroxy-tetrahydrodipicolinate (HTPA) to tetrahydrodipicolinate. The chain is 4-hydroxy-tetrahydrodipicolinate reductase from Wolinella succinogenes (strain ATCC 29543 / DSM 1740 / CCUG 13145 / JCM 31913 / LMG 7466 / NCTC 11488 / FDC 602W) (Vibrio succinogenes).